The primary structure comprises 159 residues: Transcriptional repressor NrdR (159 aa).

A zinc finger spans residues 3 to 34 (CPFCRHEDTQVVDSRVSEDGAAIRRRRRCSAC). An ATP-cone domain is found at 49-139 (PAVVKKDGSR…VYRRFEDVSE (91 aa)).

Belongs to the NrdR family. The cofactor is Zn(2+).

Functionally, negatively regulates transcription of bacterial ribonucleotide reductase nrd genes and operons by binding to NrdR-boxes. The sequence is that of Transcriptional repressor NrdR from Burkholderia ambifaria (strain MC40-6).